A 1040-amino-acid polypeptide reads, in one-letter code: uncharacterized protein (1040 aa).

Positions 403–588 (RLEESSKKGG…YSLIKFLRIK (186 aa)) constitute a Helicase ATP-binding domain. 416–423 (DDMGLGKT) serves as a coordination point for ATP. The segment at 746–798 (CSLCMDVVAELLIIVPCGHFLCRECLTHVITSSEDMAKQTSNENISPKCSVCE) adopts an RING-type zinc-finger fold. In terms of domain architecture, Helicase C-terminal spans 866–1032 (KIEKALNAVK…ISRLNTKELS (167 aa)).

Belongs to the SNF2/RAD54 helicase family.

The protein resides in the nucleus. This is an uncharacterized protein from Schizosaccharomyces pombe (strain 972 / ATCC 24843) (Fission yeast).